A 290-amino-acid chain; its full sequence is Arylamine N-acetyltransferase 1 (290 aa).

At methionine 1 the chain carries N-acetylmethionine. Residue serine 103 coordinates CoA. 106 to 107 (IH) provides a ligand contact to substrate. Tyrosine 208 provides a ligand contact to CoA.

Belongs to the arylamine N-acetyltransferase family.

Its subcellular location is the cytoplasm. The catalysed reaction is an arylamine + acetyl-CoA = an N-acetylarylamine + CoA. In terms of biological role, participates in the detoxification of a plethora of hydrazine and arylamine drugs. This is Arylamine N-acetyltransferase 1 (NAT1) from Bos taurus (Bovine).